Reading from the N-terminus, the 283-residue chain is MDDDGFRNWGYYEPAAASSFKGNLGLQLMSTIDRNTKPFLPGRESNLMIGSNGSYHSREQDMNYSWINQPKDNKFFNMLPISTPSYSNVLSETSGSNSIQMIHQPVLNSSRFEENPIPPPAPCEEQTGKKRKMRGSIATPTVPKAKKMRKPKEERDVTNNNVQQQQQRVKPVKKSVDLVINGVSMDISGLPVPVCTCTGTPQQCYRWGCGGWQSACCTTNISVYPLPMSTKRRGARISGRKMSQGAFKKVLEKLSTEGYSFGNAIDLKSHWARHGTNKFVTIR.

The disordered stretch occupies residues 111-170 (RFEENPIPPPAPCEEQTGKKRKMRGSIATPTVPKAKKMRKPKEERDVTNNNVQQQQQRVK). The segment covering 158 to 169 (TNNNVQQQQQRV) has biased composition (low complexity).

This sequence belongs to the BBR/BPC family. As to expression, expressed in seedlings, leaves and pistils. Detected in the base of flowers and tips of carpels, in leaf and sepal vasculature, in young rosette, in the lateral and tip of primary roots, and in the whole ovule.

The protein resides in the nucleus. Its function is as follows. Transcriptional regulator that specifically binds to GA-rich elements (GAGA-repeats) present in regulatory sequences of genes involved in developmental processes. Negatively regulates the homeotic gene AGL11/STK, which controls ovule primordium identity, by a cooperative binding to purine-rich elements present in the regulatory sequence leading to DNA conformational changes. In Arabidopsis thaliana (Mouse-ear cress), this protein is Protein BASIC PENTACYSTEINE1 (BPC1).